We begin with the raw amino-acid sequence, 995 residues long: Zinc finger protein ZFPM1 (995 aa).

Residues 1-14 are compositionally biased toward basic residues; the sequence is MSRRKQSNPRQIKR. Residues 1–103 are disordered; that stretch reads MSRRKQSNPR…EAAMASPWSG (103 aa). Residues 15 to 36 are compositionally biased toward basic and acidic residues; sequence SLRDMEAGEEAKAMDSSPKEQE. Composition is skewed to acidic residues over residues 67–78 and 86–95; these read SPEDPEDMEGQE and EEKEEKEEEA. Serine 99 and serine 143 each carry phosphoserine. Residues 249-282 form a CCHC FOG-type 1 zinc finger; that stretch reads VINKDVFPCKDCGIWYRSERNLQAHLLYYCASRQ. Positions 257, 260, 273, and 278 each coordinate Zn(2+). Serine 286 carries the post-translational modification Phosphoserine. 3 consecutive C2H2-type zinc fingers follow at residues 303–327, 333–355, and 361–384; these read RVCPFPQCRKSCPSASSLEIHMRSH, FVCLICLSAFTTKANCERHLKVH, and GVCHNCGFISTTRDILYSHLVTNH. The interval 343 to 354 is interaction with TACC3; it reads TTKANCERHLKV. 3 positions are modified to phosphoserine: serine 397, serine 497, and serine 500. Residues 424–526 are disordered; that stretch reads PLVPADKAPT…SSPGPGELTM (103 aa). Residues 509–525 are compositionally biased toward low complexity; the sequence is ELSSPTPGSSPGPGELT. A CCHC FOG-type 2 zinc finger spans residues 584–617; sequence FSGTKGATCFECEITFNNINNFYVHKRLYCSGRR. 4 residues coordinate Zn(2+): cysteine 592, cysteine 595, histidine 608, and cysteine 613. A disordered region spans residues 616–694; it reads RRAPEDPPTV…SVDDAEDDPS (79 aa). Residues 630-652 are compositionally biased toward low complexity; sequence AATGPARAPAGAAAEPDPSRSSP. Phosphoserine is present on residues serine 651 and serine 684. The segment at 690 to 723 adopts a CCHC FOG-type 3 zinc-finger fold; that stretch reads EDDPSRTLCEACNIRFSRHETYTVHKRYYCASRH. Zn(2+)-binding residues include cysteine 698, cysteine 701, histidine 714, and cysteine 719. A disordered region spans residues 721 to 827; it reads SRHDPPPRRP…PRRQSPDAPT (107 aa). 2 stretches are compositionally biased toward pro residues: residues 728–740 and 764–779; these read RRPPAPTTAPGPA and GAPPPAAGPAPVPVVP. A compositionally biased stretch (low complexity) spans 785–800; the sequence is LPSSPRPGSASAGPAP. Residue serine 803 is modified to Phosphoserine. Positions 811–817 are interaction with CTBP2; it reads PIDLSKR. A Phosphoserine modification is found at serine 822. Residues 830–863 form a CCHC FOG-type 4 zinc finger; the sequence is PALADYHECTACRVSFHSLEAYLAHKKYSCPAAP. Positions 838, 841, 854, and 859 each coordinate Zn(2+). Residues 868–891 form a C2H2-type 4 zinc finger; that stretch reads ALCPYCPPNGRVRGDLVEHLRQAH. The interval 892–960 is disordered; the sequence is GLQVAKPAAS…APAPAPGGGG (69 aa). Over residues 908–922 the composition is skewed to basic and acidic residues; that stretch reads TPAERAPRDSPDGRA. Phosphoserine is present on residues serine 925 and serine 927. Residues 957–990 form a CCHC FOG-type 5 zinc finger; that stretch reads GGGGGHRYCRLCNIRFSSLSTFIAHKKYYCSSHA. 4 residues coordinate Zn(2+): cysteine 965, cysteine 968, histidine 981, and cysteine 986.

This sequence belongs to the FOG (Friend of GATA) family. In terms of assembly, interacts with the N-terminal zinc-finger of GATA1, GATA2 and GATA3. Interacts with corepressor CTBP2; this interaction is however not essential for corepressor activity in erythropoiesis. Interacts with TACC3. In terms of tissue distribution, mainly expressed in hematopoietic tissues. Expressed in the spleen, a primary site of hematopoiesis in the adult mouse, as well as in the liver and testis, but not in the heart, brain, lung, kidney, or skeletal muscle. Among hematopoietic cell lines, it is strongly expressed in erythroid and megakaryocytic cell lines. Expressed at low level in several lymphoid and early myeloid cell lines. Not expressed in mast cell and macrophage lines. Expressed in the heart, where it colocalizes with GATA4, GATA5 and GATA6.

Its subcellular location is the nucleus. Transcription regulator that plays an essential role in erythroid and megakaryocytic cell differentiation. Essential cofactor that acts via the formation of a heterodimer with transcription factors of the GATA family GATA1, GATA2 and GATA3. Such heterodimer can both activate or repress transcriptional activity, depending on the cell and promoter context. The heterodimer formed with GATA proteins is essential to activate expression of genes such as NFE2, ITGA2B, alpha- and beta-globin, while it represses expression of KLF1. May be involved in regulation of some genes in gonads. May also be involved in cardiac development, in a non-redundant way with ZFPM2/FOG2. The chain is Zinc finger protein ZFPM1 (Zfpm1) from Mus musculus (Mouse).